Consider the following 328-residue polypeptide: Cell division protein ZipA (328 aa).

Residues 1-4 are Periplasmic-facing; that stretch reads MDLN. The helical transmembrane segment at 5–25 threads the bilayer; it reads TILIIVGIVALVALIVHGLWS. Residues 26 to 328 lie on the Cytoplasmic side of the membrane; that stretch reads NRREKSKYFD…NAEQAYLARV (303 aa). The interval 44-82 is disordered; that stretch reads SLTSRSHTQEEMVQPNNISPNTYVENGHTPISQPTTEKL. The segment covering 57 to 81 has biased composition (polar residues); sequence QPNNISPNTYVENGHTPISQPTTEK.

Belongs to the ZipA family. As to quaternary structure, interacts with FtsZ via their C-terminal domains.

Its subcellular location is the cell inner membrane. Its function is as follows. Essential cell division protein that stabilizes the FtsZ protofilaments by cross-linking them and that serves as a cytoplasmic membrane anchor for the Z ring. Also required for the recruitment to the septal ring of downstream cell division proteins. This Haemophilus influenzae (strain PittGG) protein is Cell division protein ZipA.